We begin with the raw amino-acid sequence, 209 residues long: Large ribosomal subunit protein bL25 (209 aa).

The tract at residues 190 to 209 (LKSEEAASEGAAEEEAKDGE) is disordered. Residues 200 to 209 (AAEEEAKDGE) are compositionally biased toward acidic residues.

Belongs to the bacterial ribosomal protein bL25 family. CTC subfamily. As to quaternary structure, part of the 50S ribosomal subunit; part of the 5S rRNA/L5/L18/L25 subcomplex. Contacts the 5S rRNA. Binds to the 5S rRNA independently of L5 and L18.

This is one of the proteins that binds to the 5S RNA in the ribosome where it forms part of the central protuberance. This Brucella anthropi (strain ATCC 49188 / DSM 6882 / CCUG 24695 / JCM 21032 / LMG 3331 / NBRC 15819 / NCTC 12168 / Alc 37) (Ochrobactrum anthropi) protein is Large ribosomal subunit protein bL25.